An 86-amino-acid polypeptide reads, in one-letter code: Class II hydrophobin 2 (86 aa).

Residues 1–15 form the signal peptide; it reads MQFFAVALFATSALA. Intrachain disulfides connect cysteine 18–cysteine 67, cysteine 28–cysteine 58, cysteine 29–cysteine 41, and cysteine 68–cysteine 79.

Belongs to the cerato-ulmin hydrophobin family. Homodimer. Homodimers further self-assemble to form highly ordered films at water-air interfaces through intermolecular interactions.

The protein localises to the secreted. It is found in the spore wall. It localises to the cell wall. In terms of biological role, aerial growth, conidiation, and dispersal of filamentous fungi in the environment rely upon a capability of their secreting small amphipathic proteins called hydrophobins (HPBs) with low sequence identity. Class I can self-assemble into an outermost layer of rodlet bundles on aerial cell surfaces, conferring cellular hydrophobicity that supports fungal growth, development and dispersal; whereas Class II form highly ordered films at water-air interfaces through intermolecular interactions but contribute nothing to the rodlet structure. Hbf2 is a class II hydrophobin that is involved in sporuration. In Hypocrea jecorina (Trichoderma reesei), this protein is Class II hydrophobin 2.